Consider the following 521-residue polypeptide: Bacillolysin (521 aa).

The signal sequence occupies residues 1–27 (MGLGKKLSVAVAASFMSLSISLPGVQA). Positions 28–221 (AEGHQLKENQ…ILKQQNKVEH (194 aa)) are cleaved as a propeptide — activation peptide. Aspartate 360 serves as a coordination point for Ca(2+). Position 364 (histidine 364) interacts with Zn(2+). The active site involves glutamate 365. 2 residues coordinate Zn(2+): histidine 368 and glutamate 388. Residues aspartate 399, aspartate 402, aspartate 404, and glutamate 407 each coordinate Ca(2+). Histidine 449 (proton donor) is an active-site residue.

The protein belongs to the peptidase M4 family. The cofactor is Ca(2+). Zn(2+) is required as a cofactor.

It is found in the secreted. The catalysed reaction is Similar, but not identical, to that of thermolysin.. Functionally, extracellular zinc metalloprotease. The polypeptide is Bacillolysin (nprE) (Bacillus subtilis subsp. amylosacchariticus).